Consider the following 286-residue polypeptide: Tungstate-binding protein TupA (286 aa).

An N-terminal signal peptide occupies residues 1-20 (MKRLLSIITAVMMLALALTG). A lipid anchor (N-palmitoyl cysteine) is attached at Cys-21. Cys-21 carries the S-diacylglycerol cysteine lipid modification.

As to quaternary structure, monomer. The complex is composed of two ATP-binding proteins (TupC), two transmembrane proteins (TupB) and a solute-binding protein (TupA).

Its subcellular location is the cell membrane. Functionally, part of an ABC transporter complex involved in tungstate uptake. Specifically binds tungstate. This Peptoclostridium acidaminophilum (Eubacterium acidaminophilum) protein is Tungstate-binding protein TupA.